Here is a 243-residue protein sequence, read N- to C-terminus: MRRPVIAGNWKMHMTCAQARDYMAAFLPQIERAPQDREIVLAPPFTALSTMAAAAEHSVVGLASQNVHWQDHGAFTAEISAEMLLEHGVAYTIVGHSEPRKYFSESDEQINHRARCSQAKGLIPIVCVGESDEQRERGEAERVIRRQIEQGLEGLDANKLVVAYEPIWAIGTGKTCEAAEANRICGLIRSWVGATDLIIQYGGSVKPTNIDELMAMSDIDGVLVGGASLKPDSFARIANYQAI.

Position 9 to 11 (9 to 11) interacts with substrate; the sequence is NWK. His-96 acts as the Electrophile in catalysis. Glu-165 acts as the Proton acceptor in catalysis. Substrate-binding positions include Gly-171, Ser-204, and 225–226; that span reads GG.

Belongs to the triosephosphate isomerase family. Homodimer.

The protein resides in the cytoplasm. It carries out the reaction D-glyceraldehyde 3-phosphate = dihydroxyacetone phosphate. It participates in carbohydrate biosynthesis; gluconeogenesis. The protein operates within carbohydrate degradation; glycolysis; D-glyceraldehyde 3-phosphate from glycerone phosphate: step 1/1. Functionally, involved in the gluconeogenesis. Catalyzes stereospecifically the conversion of dihydroxyacetone phosphate (DHAP) to D-glyceraldehyde-3-phosphate (G3P). In Parasynechococcus marenigrum (strain WH8102), this protein is Triosephosphate isomerase.